The following is a 127-amino-acid chain: Small ribosomal subunit protein uS13 (127 aa).

Residues 90–127 (RRHRQGLPVRGQRTRTNARTRRGRRLTVAGKKKTPAKK) are disordered. Positions 101–127 (QRTRTNARTRRGRRLTVAGKKKTPAKK) are enriched in basic residues.

Belongs to the universal ribosomal protein uS13 family. As to quaternary structure, part of the 30S ribosomal subunit. Forms a loose heterodimer with protein S19. Forms two bridges to the 50S subunit in the 70S ribosome.

In terms of biological role, located at the top of the head of the 30S subunit, it contacts several helices of the 16S rRNA. In the 70S ribosome it contacts the 23S rRNA (bridge B1a) and protein L5 of the 50S subunit (bridge B1b), connecting the 2 subunits; these bridges are implicated in subunit movement. Contacts the tRNAs in the A and P-sites. This is Small ribosomal subunit protein uS13 from Synechocystis sp. (strain ATCC 27184 / PCC 6803 / Kazusa).